The following is a 568-amino-acid chain: General O-oligosaccharyltransferase (568 aa).

12 helical membrane-spanning segments follow: residues 17–37 (VAVM…LAWL), 46–66 (LTFA…ALFL), 78–98 (LALP…VVDF), 101–121 (ALLS…GYNL), 132–152 (FTLS…IACI), 176–196 (FAQP…CLYL), 214–234 (IVFA…LFFI), 251–271 (YAVL…PRFT), 349–369 (LLVW…LIWI), 376–396 (AKTT…IHTL), 397–417 (LEYP…MGLI), and 429–449 (VPVS…ALIW).

This sequence belongs to the PglL O-oligosaccharyltransferase family.

It is found in the cell membrane. Catalyzes the O-glycosylation of multiple protein targets. Is responsible for general protein glycosylation within A.baylyi ADP1. Does not act as an O-antigen ligase. The polypeptide is General O-oligosaccharyltransferase (Acinetobacter baylyi (strain ATCC 33305 / BD413 / ADP1)).